A 75-amino-acid chain; its full sequence is Iota-conotoxin-like R11.3 (75 aa).

The signal sequence occupies residues 1-19 (MKLCLTFLLVLMILASVTG). Positions 20–34 (EKLSEQTLRRAARKN) are excised as a propeptide. 4 cysteine pairs are disulfide-bonded: Cys39/Cys53, Cys46/Cys58, Cys52/Cys63, and Cys57/Cys70.

The protein belongs to the conotoxin I1 superfamily. As to expression, expressed by the venom duct.

The protein resides in the secreted. Functionally, iota-conotoxins bind to voltage-gated sodium channels (Nav) and act as agonists by shifting the voltage-dependence of activation to more hyperpolarized levels. Produces general excitatory symptoms. In Conus radiatus (Rayed cone), this protein is Iota-conotoxin-like R11.3.